The primary structure comprises 464 residues: Argininosuccinate lyase (464 aa).

The protein belongs to the lyase 1 family. Argininosuccinate lyase subfamily.

The protein localises to the cytoplasm. The catalysed reaction is 2-(N(omega)-L-arginino)succinate = fumarate + L-arginine. Its pathway is amino-acid biosynthesis; L-arginine biosynthesis; L-arginine from L-ornithine and carbamoyl phosphate: step 3/3. The protein is Argininosuccinate lyase of Pseudomonas fluorescens (strain SBW25).